The primary structure comprises 806 residues: Leucine--tRNA ligase (806 aa).

The 'HIGH' region motif lies at 40–51 (PYPSGAGLHVGH). The 'KMSKS' region signature appears at 578–582 (KMSKS). K581 contributes to the ATP binding site.

Belongs to the class-I aminoacyl-tRNA synthetase family.

The protein localises to the cytoplasm. The enzyme catalyses tRNA(Leu) + L-leucine + ATP = L-leucyl-tRNA(Leu) + AMP + diphosphate. The chain is Leucine--tRNA ligase from Staphylococcus aureus (strain MSSA476).